The sequence spans 487 residues: Zinc finger and BTB domain-containing protein 32 (487 aa).

The 59-residue stretch at 29–87 (CDTLITVGSQEFPAHSLVLAGVSQQLGRRGQWALGEGISPSTFAQLLNFVYGESVELQP) folds into the BTB domain. Residues 112–166 (ARGDRAKKPDPGLKKHQEEPEKPSRNPERELGDPGEKQKPEQVSRTGGREQEMLH) show a composition bias toward basic and acidic residues. Disordered regions lie at residues 112–244 (ARGD…TSVT) and 308–371 (QNQL…ARSR). The segment covering 308–320 (QNQLASSSPTPGS) has biased composition (polar residues). A compositionally biased stretch (pro residues) spans 357–369 (PPRPHPPPAPPAR). 3 consecutive C2H2-type zinc fingers follow at residues 373–395 (YACS…YRVH), 401–423 (FSCS…LRTH), and 428–450 (YRCS…MRGH). The tract at residues 468 to 487 (SSSRPSRPSTSPCCPSSSTT) is disordered.

Belongs to the krueppel C2H2-type zinc-finger protein family. In terms of assembly, homodimer (via PTB domain). Interacts with the N-terminal of FANCC. Interacts with ZBTB16. Interacts with GATA3. Predominantly expressed in testis. Some isoforms are ubiquitously expressed.

The protein localises to the nucleus. DNA-binding protein that binds to the to a 5'-TGTACAGTGT-3' core sequence. May function as a transcriptional transactivator and transcriptional repressor. Probably exerts its repressor effect by preventing GATA3 from binding to DNA. May play a role in regulating the differentiation and activation of helper T-cells. This chain is Zinc finger and BTB domain-containing protein 32 (ZBTB32), found in Homo sapiens (Human).